Consider the following 165-residue polypeptide: ATP synthase subunit b (165 aa).

Residues 5 to 25 (LVGITWEFVFQIVNTFIIFLL) form a helical membrane-spanning segment.

It belongs to the ATPase B chain family. F-type ATPases have 2 components, F(1) - the catalytic core - and F(0) - the membrane proton channel. F(1) has five subunits: alpha(3), beta(3), gamma(1), delta(1), epsilon(1). F(0) has three main subunits: a(1), b(2) and c(10-14). The alpha and beta chains form an alternating ring which encloses part of the gamma chain. F(1) is attached to F(0) by a central stalk formed by the gamma and epsilon chains, while a peripheral stalk is formed by the delta and b chains.

It localises to the cell membrane. In terms of biological role, f(1)F(0) ATP synthase produces ATP from ADP in the presence of a proton or sodium gradient. F-type ATPases consist of two structural domains, F(1) containing the extramembraneous catalytic core and F(0) containing the membrane proton channel, linked together by a central stalk and a peripheral stalk. During catalysis, ATP synthesis in the catalytic domain of F(1) is coupled via a rotary mechanism of the central stalk subunits to proton translocation. Its function is as follows. Component of the F(0) channel, it forms part of the peripheral stalk, linking F(1) to F(0). This chain is ATP synthase subunit b, found in Clostridioides difficile (strain 630) (Peptoclostridium difficile).